Consider the following 330-residue polypeptide: Biotin synthase (330 aa).

Residues 55–282 (NAVQRSTLLS…TAYVRLSAGR (228 aa)) enclose the Radical SAM core domain. [4Fe-4S] cluster-binding residues include Cys70, Cys74, and Cys77. The [2Fe-2S] cluster site is built by Cys114, Cys145, Cys205, and Arg277.

The protein belongs to the radical SAM superfamily. Biotin synthase family. In terms of assembly, homodimer. The cofactor is [4Fe-4S] cluster. Requires [2Fe-2S] cluster as cofactor.

It carries out the reaction (4R,5S)-dethiobiotin + (sulfur carrier)-SH + 2 reduced [2Fe-2S]-[ferredoxin] + 2 S-adenosyl-L-methionine = (sulfur carrier)-H + biotin + 2 5'-deoxyadenosine + 2 L-methionine + 2 oxidized [2Fe-2S]-[ferredoxin]. It participates in cofactor biosynthesis; biotin biosynthesis; biotin from 7,8-diaminononanoate: step 2/2. Its function is as follows. Catalyzes the conversion of dethiobiotin (DTB) to biotin by the insertion of a sulfur atom into dethiobiotin via a radical-based mechanism. This chain is Biotin synthase, found in Methylibium petroleiphilum (strain ATCC BAA-1232 / LMG 22953 / PM1).